We begin with the raw amino-acid sequence, 298 residues long: Fe(II)/2-oxoglutarate-dependent dioxygenase nvfF (298 aa).

Histidine 137, aspartate 139, and histidine 212 together coordinate Fe cation.

The protein belongs to the PhyH family. As to quaternary structure, homodimer. Requires Fe cation as cofactor.

The catalysed reaction is fumigatonoid C + 2-oxoglutarate + O2 = novofumigatonin + succinate + CO2 + H2O. Its pathway is secondary metabolite biosynthesis; terpenoid biosynthesis. Fe(II)/2-oxoglutarate-dependent dioxygenase; part of the gene cluster that mediates the biosynthesis of novofumigatonin, a heavily oxygenated meroterpenoid containing a unique orthoester moiety. The first step of the pathway is the synthesis of 3,5-dimethylorsellinic acid (DMOA) by the polyketide synthase nvfA via condensation of one acetyl-CoA starter unit with 3 malonyl-CoA units and 2 methylations. DMOA is then converted to farnesyl-DMOA by the farnesyltransferase nvfB. Epoxydation by FAD-dependent monooxygenase nvfK, followed by a protonation-initiated cyclization catalyzed by the terpene cyclase nvfL leads to the production of asnavolin H. The short chain dehydrogenase nvfC then as a 3-OH dehydrogenase of asnovolin H to yield chemesin D. There are two branches to synthesize asnovolin A from chemesin D. In one branch, chemesin D undergoes Baeyer-Villiger oxidation by nvfH, methylation by nvfJ, and enoyl reduction by the nvfM D enoylreductase that reduces the double bond between C-5'and C-6', to form respectively asnovolin I, asnovolin K, and asnovolin A. In the other branch, the methylation precedes the Baeyer-Villiger oxidation and the enoyl reduction to yield asnovolin A via the asnovolin J intermediate. Asnovolin A is further converted to fumigatonoid A by the Fe(II)/2-oxoglutarate-dependent dioxygenase nvfI that catalyzes an endoperoxidation reaction. The alpha/beta hydrolase nvfD then acts as an epimerase that converts fumigatonoid A to its C-5' epimer, which then undergoes spontaneous or nvfD-catalyzed lactonization. The following step utilizes the ketoreductase nvfG to produce fumigatonoid B. The dioxygenase nvfE further converts fumigatonoid B into fumigatonoid C. Finally the Fe(II)/2-oxoglutarate-dependent dioxygenase nvfF catalyzes two rounds of oxidation to transform fumigatonoid C into the end product, novofumigatonin A. The chain is Fe(II)/2-oxoglutarate-dependent dioxygenase nvfF from Aspergillus novofumigatus (strain IBT 16806).